A 248-amino-acid polypeptide reads, in one-letter code: Probable transcriptional regulatory protein ECH_0704 (248 aa).

Residues 1-21 (MAGHSQFANIKHRKGAQDAKR) form a disordered region.

It belongs to the TACO1 family.

It is found in the cytoplasm. The sequence is that of Probable transcriptional regulatory protein ECH_0704 from Ehrlichia chaffeensis (strain ATCC CRL-10679 / Arkansas).